The following is a 299-amino-acid chain: Hydroxymethylglutaryl-CoA lyase YngG (299 aa).

Residues 7–274 (VTIKEVGPRD…KTNVKLEKLL (268 aa)) enclose the Pyruvate carboxyltransferase domain. Residue Arg-15 participates in substrate binding. 3 residues coordinate a divalent metal cation: Asp-16, His-207, and His-209. Residue Cys-240 is part of the active site. Asn-249 lines the a divalent metal cation pocket.

Belongs to the HMG-CoA lyase family. Homodimer and homotetramer.

It catalyses the reaction (3S)-3-hydroxy-3-methylglutaryl-CoA = acetoacetate + acetyl-CoA. The protein operates within metabolic intermediate metabolism; (S)-3-hydroxy-3-methylglutaryl-CoA degradation; acetoacetate from (S)-3-hydroxy-3-methylglutaryl-CoA: step 1/1. Functionally, involved in the catabolism of branched amino acids such as leucine. The chain is Hydroxymethylglutaryl-CoA lyase YngG (yngG) from Bacillus subtilis (strain 168).